We begin with the raw amino-acid sequence, 321 residues long: Ribosomal RNA small subunit methyltransferase H (321 aa).

Residues 40–42 (GGH), aspartate 60, phenylalanine 84, aspartate 106, and glutamine 113 contribute to the S-adenosyl-L-methionine site.

It belongs to the methyltransferase superfamily. RsmH family.

It localises to the cytoplasm. It catalyses the reaction cytidine(1402) in 16S rRNA + S-adenosyl-L-methionine = N(4)-methylcytidine(1402) in 16S rRNA + S-adenosyl-L-homocysteine + H(+). In terms of biological role, specifically methylates the N4 position of cytidine in position 1402 (C1402) of 16S rRNA. This chain is Ribosomal RNA small subunit methyltransferase H, found in Haemophilus influenzae (strain ATCC 51907 / DSM 11121 / KW20 / Rd).